Consider the following 313-residue polypeptide: Ribose-phosphate pyrophosphokinase (313 aa).

ATP is bound by residues 37-39 (DGE) and 96-97 (RQ). Mg(2+) is bound by residues histidine 131 and aspartate 170. Lysine 193 is an active-site residue. D-ribose 5-phosphate-binding positions include arginine 195, aspartate 219, and 223–227 (DTAGT).

It belongs to the ribose-phosphate pyrophosphokinase family. Class I subfamily. In terms of assembly, homohexamer. Mg(2+) is required as a cofactor.

The protein localises to the cytoplasm. The catalysed reaction is D-ribose 5-phosphate + ATP = 5-phospho-alpha-D-ribose 1-diphosphate + AMP + H(+). It participates in metabolic intermediate biosynthesis; 5-phospho-alpha-D-ribose 1-diphosphate biosynthesis; 5-phospho-alpha-D-ribose 1-diphosphate from D-ribose 5-phosphate (route I): step 1/1. In terms of biological role, involved in the biosynthesis of the central metabolite phospho-alpha-D-ribosyl-1-pyrophosphate (PRPP) via the transfer of pyrophosphoryl group from ATP to 1-hydroxyl of ribose-5-phosphate (Rib-5-P). The sequence is that of Ribose-phosphate pyrophosphokinase from Pseudomonas aeruginosa (strain ATCC 15692 / DSM 22644 / CIP 104116 / JCM 14847 / LMG 12228 / 1C / PRS 101 / PAO1).